The sequence spans 161 residues: Allophycocyanin beta chain (161 aa).

Asn71 bears the N4-methylasparagine mark. (2R,3E)-phycocyanobilin is bound at residue Cys81.

This sequence belongs to the phycobiliprotein family. As to quaternary structure, heterodimer of an alpha and a beta chain. Post-translationally, contains one covalently linked phycocyanobilin chromophore.

The protein resides in the cellular thylakoid membrane. In terms of biological role, light-harvesting photosynthetic bile pigment-protein from the phycobiliprotein complex. Allophycocyanin has a maximum absorption at approximately 650 nanometers. The sequence is that of Allophycocyanin beta chain (apcB) from Synechococcus sp. (strain ATCC 27144 / PCC 6301 / SAUG 1402/1) (Anacystis nidulans).